Reading from the N-terminus, the 408-residue chain is Na(+)-translocating NADH-quinone reductase subunit F (408 aa).

Residues 4–24 (VYLGVGMFTAIVLVLVLVILF) traverse the membrane as a helical segment. One can recognise a 2Fe-2S ferredoxin-type domain in the interval 33-127 (GDIIIGINGD…DMEIELDEEI (95 aa)). Residues Cys-70, Cys-76, Cys-79, and Cys-111 each contribute to the [2Fe-2S] cluster site. In terms of domain architecture, FAD-binding FR-type spans 130–270 (IKKWECDVIS…SGPFGEFFAK (141 aa)).

Belongs to the NqrF family. In terms of assembly, composed of six subunits; NqrA, NqrB, NqrC, NqrD, NqrE and NqrF. The cofactor is [2Fe-2S] cluster. Requires FAD as cofactor.

It is found in the cell inner membrane. It catalyses the reaction a ubiquinone + n Na(+)(in) + NADH + H(+) = a ubiquinol + n Na(+)(out) + NAD(+). Functionally, NQR complex catalyzes the reduction of ubiquinone-1 to ubiquinol by two successive reactions, coupled with the transport of Na(+) ions from the cytoplasm to the periplasm. The first step is catalyzed by NqrF, which accepts electrons from NADH and reduces ubiquinone-1 to ubisemiquinone by a one-electron transfer pathway. The chain is Na(+)-translocating NADH-quinone reductase subunit F from Shewanella denitrificans (strain OS217 / ATCC BAA-1090 / DSM 15013).